The primary structure comprises 1053 residues: DNA-directed RNA polymerase subunit beta' (1053 aa).

Residues C60, C62, C75, and C78 each coordinate Zn(2+). Mg(2+) is bound by residues D449, D451, and D453.

The protein belongs to the RNA polymerase beta' chain family. In terms of assembly, the RNAP catalytic core consists of 2 alpha, 1 beta, 1 beta' and 1 omega subunit. When a sigma factor is associated with the core the holoenzyme is formed, which can initiate transcription. Requires Mg(2+) as cofactor. Zn(2+) serves as cofactor.

It carries out the reaction RNA(n) + a ribonucleoside 5'-triphosphate = RNA(n+1) + diphosphate. Its function is as follows. DNA-dependent RNA polymerase catalyzes the transcription of DNA into RNA using the four ribonucleoside triphosphates as substrates. The sequence is that of DNA-directed RNA polymerase subunit beta' from Brochothrix thermosphacta (Microbacterium thermosphactum).